A 339-amino-acid polypeptide reads, in one-letter code: MLEVQSSNHGCERQAPTTSPASSAGHAVEVRPGLYLGGAAAVAGPDYLREAGITAVLTVDSEPAFPAGAGFEGLQSLFVPALDKPETDLLSHLDRCVAFIGQARSEGRAVLVHCHAGVSRSVAVVTAFIMKTEQLTFEKAYENLQTIKPEAKMNEGFEWQLKLYEAMGHEVHTSSAVYKQYRLQKVTEKYPELRNLPRELFAVDPTTVSQGLKDDILYKCRKCRRSLFRRSSILDHSEGSGPVAFAHKRTGLSSVLTTGNQAQCTSYFIEPVQWMESALLGVMDGQLLCPKCSAKLGSFNWYGEQCSCGRWITPAFQIHKNRVDEVKTLPALGSQTKKP.

An N-acetylmethionine modification is found at M1. A compositionally biased stretch (polar residues) spans 1-22 (MLEVQSSNHGCERQAPTTSPAS). Residues 1–25 (MLEVQSSNHGCERQAPTTSPASSAG) form a disordered region. One can recognise a Tyrosine-protein phosphatase domain in the interval 26–170 (HAVEVRPGLY…LKLYEAMGHE (145 aa)). The active-site Phosphocysteine intermediate is the C114. 115-120 (HAGVSR) contacts substrate. Position 334 is a phosphoserine (S334).

Belongs to the protein-tyrosine phosphatase family. Non-receptor class dual specificity subfamily. In terms of assembly, monomer. Zn(2+) serves as cofactor.

Its subcellular location is the nucleus. The protein localises to the cytoplasm. It is found in the cytosol. It carries out the reaction O-phospho-L-tyrosyl-[protein] + H2O = L-tyrosyl-[protein] + phosphate. The catalysed reaction is O-phospho-L-seryl-[protein] + H2O = L-seryl-[protein] + phosphate. The enzyme catalyses O-phospho-L-threonyl-[protein] + H2O = L-threonyl-[protein] + phosphate. Dual specificity phosphatase; can dephosphorylate both phosphotyrosine and phosphoserine or phosphothreonine residues. Can dephosphorylate glucokinase (in vitro). Has phosphatase activity with the synthetic substrate 6,8-difluoro-4-methylumbelliferyl phosphate and other in vitro substrates. This Rattus norvegicus (Rat) protein is Dual specificity protein phosphatase 12 (Dusp12).